We begin with the raw amino-acid sequence, 177 residues long: Ribosome maturation factor RimP (177 aa).

It belongs to the RimP family.

It is found in the cytoplasm. Functionally, required for maturation of 30S ribosomal subunits. The sequence is that of Ribosome maturation factor RimP from Streptococcus sanguinis (strain SK36).